The sequence spans 147 residues: Deoxyuridine 5'-triphosphate nucleotidohydrolase (147 aa).

Substrate contacts are provided by residues 68 to 70 (RSG), asparagine 81, and 85 to 87 (TID).

It belongs to the dUTPase family. The cofactor is Mg(2+).

It carries out the reaction dUTP + H2O = dUMP + diphosphate + H(+). It participates in pyrimidine metabolism; dUMP biosynthesis; dUMP from dCTP (dUTP route): step 2/2. Its function is as follows. This enzyme is involved in nucleotide metabolism: it produces dUMP, the immediate precursor of thymidine nucleotides and it decreases the intracellular concentration of dUTP so that uracil cannot be incorporated into DNA. This chain is Deoxyuridine 5'-triphosphate nucleotidohydrolase, found in Solibacter usitatus (strain Ellin6076).